Consider the following 151-residue polypeptide: MPTWRYSVELEPERTAKASLRDVSMSYKLTVETLRLIKGKSIEEARRILTEIAEMKRSVPLKRYNKKVGHRSDVPGPGRYPVKVAKNLLKLLDNLENNAEFKGLNVENLRIVHAAAHKGMKIRNYLPRAFGRATPYYDQLVHVEIIAREVE.

The protein belongs to the universal ribosomal protein uL22 family. In terms of assembly, part of the 50S ribosomal subunit.

Its function is as follows. This protein binds specifically to 23S rRNA. It makes multiple contacts with different domains of the 23S rRNA in the assembled 50S subunit and ribosome. In terms of biological role, the globular domain of the protein is located near the polypeptide exit tunnel on the outside of the subunit, while an extended beta-hairpin is found that lines the wall of the exit tunnel in the center of the 70S ribosome. The polypeptide is Large ribosomal subunit protein uL22 (Thermofilum pendens (strain DSM 2475 / Hrk 5)).